Reading from the N-terminus, the 351-residue chain is Silk gland factor 3 (351 aa).

Disordered stretches follow at residues 61–88 and 131–154; these read ADPW…HDHR and SSPR…TPTS. The segment covering 135–145 has biased composition (basic and acidic residues); the sequence is DPLHHHAMERD. The 75-residue stretch at 149–223 folds into the POU-specific domain; sequence EDTPTSDDLE…LLQKWLEEAD (75 aa). Residues 241 to 300 constitute a DNA-binding region (homeobox); the sequence is KRKKRTSIEVSVKGALEQHFHKQPKPSAQEITSLADSLQLEKEVVRVWFCNRRQKEKRMT. Residues 314–351 are disordered; the sequence is GHAHYGHGDVHGSPLQHSPPGLSPQHGLPQGAHTLAAH.

This sequence belongs to the POU transcription factor family. Class-3 subfamily. In terms of tissue distribution, restricted to the middle silk gland.

The protein resides in the nucleus. Involved in the transcriptional regulation of sericin-1 gene. In Bombyx mori (Silk moth), this protein is Silk gland factor 3 (SGF3).